The sequence spans 231 residues: 7-cyano-7-deazaguanine synthase (231 aa).

8 to 18 serves as a coordination point for ATP; that stretch reads FSGGQDSTTCL. Zn(2+) is bound by residues Cys-188, Cys-197, Cys-200, and Cys-203.

Belongs to the QueC family. Zn(2+) is required as a cofactor.

It catalyses the reaction 7-carboxy-7-deazaguanine + NH4(+) + ATP = 7-cyano-7-deazaguanine + ADP + phosphate + H2O + H(+). Its pathway is purine metabolism; 7-cyano-7-deazaguanine biosynthesis. Catalyzes the ATP-dependent conversion of 7-carboxy-7-deazaguanine (CDG) to 7-cyano-7-deazaguanine (preQ(0)). The chain is 7-cyano-7-deazaguanine synthase from Salmonella agona (strain SL483).